Consider the following 396-residue polypeptide: Fumarate--(S)-2,3-diaminopropanoate ligase (396 aa).

It catalyses the reaction (S)-2,3-diaminopropanoate + fumarate + ATP = N(3)-fumaroyl-(S)-2,3-diaminopropanoate + AMP + diphosphate. Its pathway is antibiotic biosynthesis. Involved in dapdiamide antibiotics biosynthesis. Ligates fumarate and 2,3-diaminopropionate (DAP) to form N-beta-fumaroyl-DAP. Can also form N-succinoyl-DAP from succinate and DAP, with lower efficiency. The protein is Fumarate--(S)-2,3-diaminopropanoate ligase of Enterobacter agglomerans (Erwinia herbicola).